Reading from the N-terminus, the 441-residue chain is Cysteine desulfurase, mitosomal (441 aa).

Residues 107–108, N189, Q217, and 237–239 contribute to the pyridoxal 5'-phosphate site; these read AT and SGH. An N6-(pyridoxal phosphate)lysine modification is found at K240. T277 serves as a coordination point for pyridoxal 5'-phosphate. C367 acts as the Cysteine persulfide intermediate in catalysis. C367 provides a ligand contact to [2Fe-2S] cluster.

The protein belongs to the class-V pyridoxal-phosphate-dependent aminotransferase family. NifS/IscS subfamily. In terms of assembly, interacts with ISD11. It depends on pyridoxal 5'-phosphate as a cofactor.

Its subcellular location is the mitosome. The catalysed reaction is (sulfur carrier)-H + L-cysteine = (sulfur carrier)-SH + L-alanine. Functionally, catalyzes the removal of elemental sulfur from cysteine to produce alanine. It supplies the inorganic sulfur for iron-sulfur (Fe-S) clusters in mitosomes. The protein is Cysteine desulfurase, mitosomal of Trachipleistophora hominis (Microsporidian parasite).